The chain runs to 612 residues: Dihydroxy-acid dehydratase (612 aa).

Mg(2+) is bound at residue D81. C122 contributes to the [2Fe-2S] cluster binding site. Mg(2+) is bound by residues D123 and K124. K124 carries the N6-carboxylysine modification. C193 contributes to the [2Fe-2S] cluster binding site. E489 contributes to the Mg(2+) binding site. S515 serves as the catalytic Proton acceptor.

This sequence belongs to the IlvD/Edd family. As to quaternary structure, homodimer. [2Fe-2S] cluster is required as a cofactor. Requires Mg(2+) as cofactor.

It catalyses the reaction (2R)-2,3-dihydroxy-3-methylbutanoate = 3-methyl-2-oxobutanoate + H2O. The enzyme catalyses (2R,3R)-2,3-dihydroxy-3-methylpentanoate = (S)-3-methyl-2-oxopentanoate + H2O. It functions in the pathway amino-acid biosynthesis; L-isoleucine biosynthesis; L-isoleucine from 2-oxobutanoate: step 3/4. Its pathway is amino-acid biosynthesis; L-valine biosynthesis; L-valine from pyruvate: step 3/4. Functions in the biosynthesis of branched-chain amino acids. Catalyzes the dehydration of (2R,3R)-2,3-dihydroxy-3-methylpentanoate (2,3-dihydroxy-3-methylvalerate) into 2-oxo-3-methylpentanoate (2-oxo-3-methylvalerate) and of (2R)-2,3-dihydroxy-3-methylbutanoate (2,3-dihydroxyisovalerate) into 2-oxo-3-methylbutanoate (2-oxoisovalerate), the penultimate precursor to L-isoleucine and L-valine, respectively. The sequence is that of Dihydroxy-acid dehydratase from Pseudomonas aeruginosa (strain LESB58).